A 182-amino-acid polypeptide reads, in one-letter code: MSDQVLSALEHFFLRWQRDGEARRGLPLCEWEADWRSPCELDEPKEGRVAWRPHRRAEPADFTAMNEALELTLHPAAQALFGGWFSRPVPCLYKGLRLEFVLPWNEADLDLLKENLIGHLLMLRKLKRSPSLFIATTRNEMTLVSLDNESGQVWLEWLDSGRRLVLAPSLPAFLERLETLPQ.

This sequence belongs to the Syd family.

It is found in the cell inner membrane. Its function is as follows. Interacts with the SecY protein in vivo. May bind preferentially to an uncomplexed state of SecY, thus functioning either as a chelating agent for excess SecY in the cell or as a regulatory factor that negatively controls the translocase function. This Aeromonas hydrophila subsp. hydrophila (strain ATCC 7966 / DSM 30187 / BCRC 13018 / CCUG 14551 / JCM 1027 / KCTC 2358 / NCIMB 9240 / NCTC 8049) protein is Protein Syd.